We begin with the raw amino-acid sequence, 484 residues long: Glutamate--tRNA ligase (484 aa).

The 'HIGH' region signature appears at 11–21; the sequence is PSPTGLLHIGN. The 'KMSKS' region signature appears at 255–259; that stretch reads KLSKR. Residue K258 participates in ATP binding.

Belongs to the class-I aminoacyl-tRNA synthetase family. Glutamate--tRNA ligase type 1 subfamily. Monomer.

The protein resides in the cytoplasm. The catalysed reaction is tRNA(Glu) + L-glutamate + ATP = L-glutamyl-tRNA(Glu) + AMP + diphosphate. Catalyzes the attachment of glutamate to tRNA(Glu) in a two-step reaction: glutamate is first activated by ATP to form Glu-AMP and then transferred to the acceptor end of tRNA(Glu). The protein is Glutamate--tRNA ligase of Streptococcus thermophilus (strain CNRZ 1066).